Here is a 201-residue protein sequence, read N- to C-terminus: Proteasome subunit beta 1 (201 aa).

Position 1 (M1) is a propeptide, removed in mature form; by autocatalysis. Catalysis depends on T2, which acts as the Nucleophile.

Belongs to the peptidase T1B family. In terms of assembly, the 20S proteasome core is composed of 14 alpha and 14 beta subunits that assemble into four stacked heptameric rings, resulting in a barrel-shaped structure. The two inner rings, each composed of seven catalytic beta subunits, are sandwiched by two outer rings, each composed of seven alpha subunits. The catalytic chamber with the active sites is on the inside of the barrel. Has a gated structure, the ends of the cylinder being occluded by the N-termini of the alpha-subunits. Is capped at one or both ends by the proteasome regulatory ATPase, PAN.

The protein resides in the cytoplasm. The enzyme catalyses Cleavage of peptide bonds with very broad specificity.. The formation of the proteasomal ATPase PAN-20S proteasome complex, via the docking of the C-termini of PAN into the intersubunit pockets in the alpha-rings, triggers opening of the gate for substrate entry. Interconversion between the open-gate and close-gate conformations leads to a dynamic regulation of the 20S proteasome proteolysis activity. Component of the proteasome core, a large protease complex with broad specificity involved in protein degradation. The chain is Proteasome subunit beta 1 from Pyrobaculum calidifontis (strain DSM 21063 / JCM 11548 / VA1).